A 125-amino-acid polypeptide reads, in one-letter code: Large ribosomal subunit protein bL12 (125 aa).

The protein belongs to the bacterial ribosomal protein bL12 family. In terms of assembly, homodimer. Part of the ribosomal stalk of the 50S ribosomal subunit. Forms a multimeric L10(L12)X complex, where L10 forms an elongated spine to which 2 to 4 L12 dimers bind in a sequential fashion. Binds GTP-bound translation factors.

Functionally, forms part of the ribosomal stalk which helps the ribosome interact with GTP-bound translation factors. Is thus essential for accurate translation. The chain is Large ribosomal subunit protein bL12 from Endomicrobium trichonymphae.